The sequence spans 261 residues: 5-oxoprolinase subunit A (261 aa).

The protein belongs to the LamB/PxpA family. Forms a complex composed of PxpA, PxpB and PxpC.

It catalyses the reaction 5-oxo-L-proline + ATP + 2 H2O = L-glutamate + ADP + phosphate + H(+). In terms of biological role, catalyzes the cleavage of 5-oxoproline to form L-glutamate coupled to the hydrolysis of ATP to ADP and inorganic phosphate. This Coprothermobacter proteolyticus (strain ATCC 35245 / DSM 5265 / OCM 4 / BT) protein is 5-oxoprolinase subunit A.